We begin with the raw amino-acid sequence, 440 residues long: MKAVLPDSKIPKRWYNILPDLPEPLAPPLDPETDEPIEPEKLLRIFAEELVKQEMSTERYIEIPKKVRELYAKIGRPTPLFRATNLEKALGTPARIYFKYEGATVTGSHKINTALAQAYYAKEQGIERLVTETGAGQWGTALSLAGALLGLKIRVYMARASYQQKPYRKTIMRLYGAEIYPSPSDRTEIGRKFLSEDPNHPGGLGIAISEAIEDVLKDEKARYALGSVLNHVLMHQTVIGLEAQEQMKEFEEPDVIIGCVGGGSNFAGLAYPFVRDVLSGKADYEFIAVEPKAAPSMTRGVYKYDFGDSGGYTPKMKMHTLGHTYYVPPIHAGGLRYHGLAPTLSILINHGIVKPVAYHQTEVFQAAELFAKTEGIIPAPESAHAIKGVIDRALKAKEEGREEVILFNLSGHGLLDLKGYEDYLDGKLEDYEPDYFPALG.

Lysine 110 carries the post-translational modification N6-(pyridoxal phosphate)lysine.

This sequence belongs to the TrpB family. In terms of assembly, tetramer of two alpha and two beta chains. It depends on pyridoxal 5'-phosphate as a cofactor.

It carries out the reaction (1S,2R)-1-C-(indol-3-yl)glycerol 3-phosphate + L-serine = D-glyceraldehyde 3-phosphate + L-tryptophan + H2O. Its pathway is amino-acid biosynthesis; L-tryptophan biosynthesis; L-tryptophan from chorismate: step 5/5. The beta subunit is responsible for the synthesis of L-tryptophan from indole and L-serine. This Thermococcus gammatolerans (strain DSM 15229 / JCM 11827 / EJ3) protein is Tryptophan synthase beta chain.